The chain runs to 789 residues: Trimethylamine-oxide aldolase (789 aa).

This sequence in the C-terminal section; belongs to the GcvT family.

It catalyses the reaction trimethylamine N-oxide + H(+) = dimethylamine + formaldehyde. Catalyzes the conversion of trimethylamine N-oxide (TMAO) to dimethylamine (DMA) and formaldehyde. The protein is Trimethylamine-oxide aldolase of Ruegeria pomeroyi (strain ATCC 700808 / DSM 15171 / DSS-3) (Silicibacter pomeroyi).